Consider the following 227-residue polypeptide: Ribose-5-phosphate isomerase A (227 aa).

Residues 26–29 (TGST), 82–85 (DGAD), and 95–98 (KGGG) contribute to the substrate site. Glu-104 functions as the Proton acceptor in the catalytic mechanism. Lys-122 is a binding site for substrate.

This sequence belongs to the ribose 5-phosphate isomerase family. In terms of assembly, homodimer.

The catalysed reaction is aldehydo-D-ribose 5-phosphate = D-ribulose 5-phosphate. It functions in the pathway carbohydrate degradation; pentose phosphate pathway; D-ribose 5-phosphate from D-ribulose 5-phosphate (non-oxidative stage): step 1/1. Catalyzes the reversible conversion of ribose-5-phosphate to ribulose 5-phosphate. This chain is Ribose-5-phosphate isomerase A, found in Streptococcus pneumoniae (strain Hungary19A-6).